A 273-amino-acid polypeptide reads, in one-letter code: Rhamnulose-1-phosphate aldolase (273 aa).

Glu-117 is a catalytic residue. Residues His-140, His-142, and His-211 each contribute to the Zn(2+) site.

The protein belongs to the aldolase class II family. RhaD subfamily. Requires Zn(2+) as cofactor.

It is found in the cytoplasm. It catalyses the reaction L-rhamnulose 1-phosphate = (S)-lactaldehyde + dihydroxyacetone phosphate. Its pathway is carbohydrate degradation; L-rhamnose degradation; glycerone phosphate from L-rhamnose: step 3/3. In terms of biological role, catalyzes the reversible cleavage of L-rhamnulose-1-phosphate to dihydroxyacetone phosphate (DHAP) and L-lactaldehyde. The sequence is that of Rhamnulose-1-phosphate aldolase from Listeria monocytogenes serotype 4a (strain HCC23).